A 546-amino-acid polypeptide reads, in one-letter code: MAKEIKFSDSARNLLFEGVRQLHDAVKVTMGPRGRNVLIQKSYGAPSITKDGVSVAKEIELSCPVANMGAQLVKEVASKTADAAGDGTTTATVLAYSIFKEGLRNITAGANPIEVKRGMDKAAEAIINELKKASKKVGGKEEITQVATISANSDHNIGKLIADAMEKVGKDGVITVEEAKGIEDELDVVEGMQFDRGYLSPYFVTNAEKMTAQLDNAYILLTDKKISSMKDILPLLEKTMKEGKPLLIIAEDIEGEALTTLVVNKLRGVLNIAAVKAPGFGDRRKEMLKDIAILTGGQVISEELGLSLENAEVEFLGKAGRIVIDKDNTTIVDGKGHSDDVKDRVVQIKTQIASTTSDYDKEKLQERLAKLSGGVAVIKVGAASEVEMKEKKDRVDDALSATKAAVEEGIVIGGGAALIRAAQKVHLNLHDDEKVGYEIIMRAIKAPLAQIAINAGYDGGVVVNEVEKHEGHFGFNASNGKYVDMFKEGIIDPLKVERIALQNAVSVSSLLLTTEATVHEIKEEKATPAMPDMGGMGGMGGMGGMM.

ATP is bound by residues 29–32 (TMGP), lysine 50, 86–90 (DGTTT), glycine 414, and aspartate 492.

This sequence belongs to the chaperonin (HSP60) family. Forms a cylinder of 14 subunits composed of two heptameric rings stacked back-to-back. Interacts with the co-chaperonin GroES.

Its subcellular location is the cytoplasm. It catalyses the reaction ATP + H2O + a folded polypeptide = ADP + phosphate + an unfolded polypeptide.. Together with its co-chaperonin GroES, plays an essential role in assisting protein folding. The GroEL-GroES system forms a nano-cage that allows encapsulation of the non-native substrate proteins and provides a physical environment optimized to promote and accelerate protein folding. The sequence is that of Chaperonin GroEL from Helicobacter pylori (strain P12).